Consider the following 156-residue polypeptide: Small ribosomal subunit protein uS7 (156 aa).

It belongs to the universal ribosomal protein uS7 family. In terms of assembly, part of the 30S ribosomal subunit. Contacts proteins S9 and S11.

Functionally, one of the primary rRNA binding proteins, it binds directly to 16S rRNA where it nucleates assembly of the head domain of the 30S subunit. Is located at the subunit interface close to the decoding center, probably blocks exit of the E-site tRNA. This Finegoldia magna (strain ATCC 29328 / DSM 20472 / WAL 2508) (Peptostreptococcus magnus) protein is Small ribosomal subunit protein uS7.